We begin with the raw amino-acid sequence, 194 residues long: Orotate phosphoribosyltransferase (194 aa).

117 to 125 (EDVVTTGLS) contacts 5-phospho-alpha-D-ribose 1-diphosphate. Orotate is bound by residues T121 and R149.

Belongs to the purine/pyrimidine phosphoribosyltransferase family. PyrE subfamily. In terms of assembly, homodimer. It depends on Mg(2+) as a cofactor.

The enzyme catalyses orotidine 5'-phosphate + diphosphate = orotate + 5-phospho-alpha-D-ribose 1-diphosphate. It participates in pyrimidine metabolism; UMP biosynthesis via de novo pathway; UMP from orotate: step 1/2. Its function is as follows. Catalyzes the transfer of a ribosyl phosphate group from 5-phosphoribose 1-diphosphate to orotate, leading to the formation of orotidine monophosphate (OMP). This chain is Orotate phosphoribosyltransferase, found in Novosphingobium aromaticivorans (strain ATCC 700278 / DSM 12444 / CCUG 56034 / CIP 105152 / NBRC 16084 / F199).